The chain runs to 336 residues: MDEIQDIEGLTRRALQAISRIDTLRDLTKLKNDNLGSTSWLAKYSASIKILSQEKKPIIGKAVSEARRKILEACQDRDLALRLNAQNEQFTRETLDITALPTRIFPGARHPIHVLQDKILDFFLMRGWSVVEGPELESEWLNFDALNIGPFHPAREESDTIFAEPRSASMLLRTHTSPVQLRALVSNPLPLYCVSSGKVFRSDPLDATHTPVFHQLEGLVCDRNITLGHLKGTVEDLAGYLFGAEVNLRMRCNYFPFTEPSAEFDISRDGIDWTEWGGCGLVNSKVLSMAGIDTVHYTGFAFGFGLERTLQFIHSLSDMRDIVEGDIRFSQQFGLK.

A Mg(2+)-binding site is contributed by E259.

The protein belongs to the class-II aminoacyl-tRNA synthetase family. Phe-tRNA synthetase alpha subunit type 1 subfamily. Tetramer of two alpha and two beta subunits. Mg(2+) is required as a cofactor.

It is found in the cytoplasm. It catalyses the reaction tRNA(Phe) + L-phenylalanine + ATP = L-phenylalanyl-tRNA(Phe) + AMP + diphosphate + H(+). The sequence is that of Phenylalanine--tRNA ligase alpha subunit from Tropheryma whipplei (strain Twist) (Whipple's bacillus).